Consider the following 146-residue polypeptide: Acidic phospholipase A2 CM-II (146 aa).

Positions 1-21 (MNPAHLLILAAVCVSPLGAFS) are cleaved as a signal peptide. Residues 22–27 (NRPMPL) constitute a propeptide that is removed on maturation. 7 disulfide bridges follow: cysteine 38–cysteine 98, cysteine 53–cysteine 145, cysteine 55–cysteine 71, cysteine 70–cysteine 126, cysteine 77–cysteine 119, cysteine 87–cysteine 112, and cysteine 105–cysteine 117. Positions 54, 56, and 58 each coordinate Ca(2+). Residue histidine 74 is part of the active site. Aspartate 75 is a Ca(2+) binding site. Residue aspartate 120 is part of the active site.

This sequence belongs to the phospholipase A2 family. Group I subfamily. D49 sub-subfamily. It depends on Ca(2+) as a cofactor. In terms of tissue distribution, expressed by the venom gland.

It is found in the secreted. It catalyses the reaction a 1,2-diacyl-sn-glycero-3-phosphocholine + H2O = a 1-acyl-sn-glycero-3-phosphocholine + a fatty acid + H(+). Its function is as follows. PLA2 catalyzes the calcium-dependent hydrolysis of the 2-acyl groups in 3-sn-phosphoglycerides. Is able to suppress the acetylcholine (ACh)-evoked current mediated by alpha-7 (CHRNA7)-similar nAChRs in L.stagnalis neurons (IC(50)=37 nM) and to compete with alpha-bungarotoxin for binding to muscle- and alpha-7 neuronal nAChR types, as well as to AChBPs. In inhibition of alpha-bungarotoxin binding, this toxin is similarly active against T.californica nAChR (IC(50)=1.2 uM), human alpha-7 nAChR (IC(50)=3.2 uM), and L.stagnalis AChBP (IC(50)=1.0 uM), whereas it is not active against A.californica AChBP (IC(50)&gt;100 uM). This Naja kaouthia (Monocled cobra) protein is Acidic phospholipase A2 CM-II.